The primary structure comprises 507 residues: ATP synthase subunit alpha, chloroplastic (507 aa).

170–177 contacts ATP; the sequence is GDRQTGKT.

This sequence belongs to the ATPase alpha/beta chains family. In terms of assembly, F-type ATPases have 2 components, CF(1) - the catalytic core - and CF(0) - the membrane proton channel. CF(1) has five subunits: alpha(3), beta(3), gamma(1), delta(1), epsilon(1). CF(0) has four main subunits: a, b, b' and c.

It localises to the plastid. The protein resides in the chloroplast thylakoid membrane. The enzyme catalyses ATP + H2O + 4 H(+)(in) = ADP + phosphate + 5 H(+)(out). Produces ATP from ADP in the presence of a proton gradient across the membrane. The alpha chain is a regulatory subunit. This chain is ATP synthase subunit alpha, chloroplastic, found in Phalaenopsis aphrodite subsp. formosana (Moth orchid).